The primary structure comprises 504 residues: Acid phosphatase A (504 aa).

The first 22 residues, 1–22 (MYTLLDILKGLPLLAVAAIASA), serve as a signal peptide directing secretion. N-linked (GlcNAc...) asparagine glycosylation is found at N84, N112, N168, N260, N415, N450, and N474.

This sequence belongs to the metallophosphoesterase superfamily. Purple acid phosphatase family. In terms of assembly, monomer.

The protein resides in the secreted. It carries out the reaction a phosphate monoester + H2O = an alcohol + phosphate. Functionally, acid phosphatase involved in the regulation of fungal phenotypic traits and virulence in C.parasitica. This chain is Acid phosphatase A, found in Cryphonectria parasitica (strain ATCC 38755 / EP155).